A 365-amino-acid polypeptide reads, in one-letter code: Peptide chain release factor 2 (365 aa).

Residue Q252 is modified to N5-methylglutamine.

The protein belongs to the prokaryotic/mitochondrial release factor family. Methylated by PrmC. Methylation increases the termination efficiency of RF2.

Its subcellular location is the cytoplasm. In terms of biological role, peptide chain release factor 2 directs the termination of translation in response to the peptide chain termination codons UGA and UAA. The polypeptide is Peptide chain release factor 2 (Aliivibrio fischeri (strain ATCC 700601 / ES114) (Vibrio fischeri)).